The sequence spans 185 residues: Ribosome-recycling factor (185 aa).

Belongs to the RRF family.

It localises to the cytoplasm. In terms of biological role, responsible for the release of ribosomes from messenger RNA at the termination of protein biosynthesis. May increase the efficiency of translation by recycling ribosomes from one round of translation to another. This Streptococcus sanguinis (strain SK36) protein is Ribosome-recycling factor.